The chain runs to 342 residues: S-adenosylmethionine:tRNA ribosyltransferase-isomerase (342 aa).

This sequence belongs to the QueA family. As to quaternary structure, monomer.

The protein resides in the cytoplasm. The enzyme catalyses 7-aminomethyl-7-carbaguanosine(34) in tRNA + S-adenosyl-L-methionine = epoxyqueuosine(34) in tRNA + adenine + L-methionine + 2 H(+). The protein operates within tRNA modification; tRNA-queuosine biosynthesis. Its function is as follows. Transfers and isomerizes the ribose moiety from AdoMet to the 7-aminomethyl group of 7-deazaguanine (preQ1-tRNA) to give epoxyqueuosine (oQ-tRNA). The sequence is that of S-adenosylmethionine:tRNA ribosyltransferase-isomerase from Listeria welshimeri serovar 6b (strain ATCC 35897 / DSM 20650 / CCUG 15529 / CIP 8149 / NCTC 11857 / SLCC 5334 / V8).